A 123-amino-acid polypeptide reads, in one-letter code: Small ribosomal subunit protein bS16 (123 aa).

A disordered region spans residues 87–123; that stretch reads VKNNPVKAKPGKRAQERAAEKAQKVADAAAAAADAAE. Residues 99-110 show a composition bias toward basic and acidic residues; that stretch reads RAQERAAEKAQK. A compositionally biased stretch (low complexity) spans 111-123; the sequence is VADAAAAAADAAE.

It belongs to the bacterial ribosomal protein bS16 family.

The sequence is that of Small ribosomal subunit protein bS16 from Rhizobium johnstonii (strain DSM 114642 / LMG 32736 / 3841) (Rhizobium leguminosarum bv. viciae).